The sequence spans 310 residues: UPF0282 protein PF0593 (310 aa).

This sequence belongs to the UPF0282 family.

In Pyrococcus furiosus (strain ATCC 43587 / DSM 3638 / JCM 8422 / Vc1), this protein is UPF0282 protein PF0593.